Reading from the N-terminus, the 248-residue chain is DNA/RNA-binding protein ALBA1 (248 aa).

Positions 217–248 (GRDGGYRGGNRGGSRSGFRGGRGGFRGGRALS) are disordered. Over residues 222–248 (YRGGNRGGSRSGFRGGRGGFRGGRALS) the composition is skewed to gly residues.

This sequence belongs to the histone-like Alba family. As to quaternary structure, may form homodimers. Identified in a TARE6-associated complex consisting of over 30 proteins and including ALBA1, ALBA2 and ALBA4; the complex binds to the non-coding subtelomeric repeat region TARE6.

The protein localises to the nucleus. It is found in the chromosome. Its subcellular location is the telomere. It localises to the cytoplasm. Functionally, possesses DNA- and RNA-binding activities. During the asexual blood stages binds to a sub-population of mature mRNAs and regulates the timing of their translation. Binds to DNA with relaxed sequence specificity. Associates with the subtelomeric TARE6 repeats. The protein is DNA/RNA-binding protein ALBA1 of Plasmodium falciparum (isolate 3D7).